The following is a 322-amino-acid chain: Lipoyl synthase (322 aa).

The segment at 1-24 is disordered; the sequence is MVTVLDTVSKPRPRHPEKAHRPDQ. Over residues 14-24 the composition is skewed to basic and acidic residues; that stretch reads RHPEKAHRPDQ. Positions 59, 64, 70, 85, 89, 92, and 298 each coordinate [4Fe-4S] cluster. A Radical SAM core domain is found at 71–287; that stretch reads WDKKHATFMI…ETIAYTKGFL (217 aa).

It belongs to the radical SAM superfamily. Lipoyl synthase family. It depends on [4Fe-4S] cluster as a cofactor.

It is found in the cytoplasm. It carries out the reaction [[Fe-S] cluster scaffold protein carrying a second [4Fe-4S](2+) cluster] + N(6)-octanoyl-L-lysyl-[protein] + 2 oxidized [2Fe-2S]-[ferredoxin] + 2 S-adenosyl-L-methionine + 4 H(+) = [[Fe-S] cluster scaffold protein] + N(6)-[(R)-dihydrolipoyl]-L-lysyl-[protein] + 4 Fe(3+) + 2 hydrogen sulfide + 2 5'-deoxyadenosine + 2 L-methionine + 2 reduced [2Fe-2S]-[ferredoxin]. Its pathway is protein modification; protein lipoylation via endogenous pathway; protein N(6)-(lipoyl)lysine from octanoyl-[acyl-carrier-protein]: step 2/2. Its function is as follows. Catalyzes the radical-mediated insertion of two sulfur atoms into the C-6 and C-8 positions of the octanoyl moiety bound to the lipoyl domains of lipoate-dependent enzymes, thereby converting the octanoylated domains into lipoylated derivatives. This is Lipoyl synthase from Chelativorans sp. (strain BNC1).